The primary structure comprises 78 residues: D-alanyl carrier protein (78 aa).

In terms of domain architecture, Carrier spans 1 to 78 (MEFREQVLDL…KIVEALEELK (78 aa)). Serine 36 is subject to O-(pantetheine 4'-phosphoryl)serine.

The protein belongs to the DltC family. Post-translationally, 4'-phosphopantetheine is transferred from CoA to a specific serine of apo-DCP.

The protein resides in the cytoplasm. It participates in cell wall biogenesis; lipoteichoic acid biosynthesis. Functionally, carrier protein involved in the D-alanylation of lipoteichoic acid (LTA). The loading of thioester-linked D-alanine onto DltC is catalyzed by D-alanine--D-alanyl carrier protein ligase DltA. The DltC-carried D-alanyl group is further transferred to cell membrane phosphatidylglycerol (PG) by forming an ester bond, probably catalyzed by DltD. D-alanylation of LTA plays an important role in modulating the properties of the cell wall in Gram-positive bacteria, influencing the net charge of the cell wall. This chain is D-alanyl carrier protein, found in Staphylococcus carnosus (strain TM300).